A 207-amino-acid polypeptide reads, in one-letter code: Segregation and condensation protein B (207 aa).

It belongs to the ScpB family. In terms of assembly, homodimer. Homodimerization may be required to stabilize the binding of ScpA to the Smc head domains. Component of a cohesin-like complex composed of ScpA, ScpB and the Smc homodimer, in which ScpA and ScpB bind to the head domain of Smc. The presence of the three proteins is required for the association of the complex with DNA.

The protein resides in the cytoplasm. Participates in chromosomal partition during cell division. May act via the formation of a condensin-like complex containing Smc and ScpA that pull DNA away from mid-cell into both cell halves. This Mycoplasma genitalium (strain ATCC 33530 / DSM 19775 / NCTC 10195 / G37) (Mycoplasmoides genitalium) protein is Segregation and condensation protein B.